The following is a 342-amino-acid chain: Probable dual-specificity RNA methyltransferase RlmN (342 aa).

The active-site Proton acceptor is the Glu-91. In terms of domain architecture, Radical SAM core spans 97 to 327; the sequence is YKHGNSICVS…TTIRREMGAD (231 aa). Cys-104 and Cys-332 are oxidised to a cystine. Cys-111, Cys-115, and Cys-118 together coordinate [4Fe-4S] cluster. S-adenosyl-L-methionine is bound by residues 158–159, Ser-190, 213–215, and Asn-289; these read GE and SLH. Catalysis depends on Cys-332, which acts as the S-methylcysteine intermediate.

This sequence belongs to the radical SAM superfamily. RlmN family. The cofactor is [4Fe-4S] cluster.

It is found in the cytoplasm. It catalyses the reaction adenosine(2503) in 23S rRNA + 2 reduced [2Fe-2S]-[ferredoxin] + 2 S-adenosyl-L-methionine = 2-methyladenosine(2503) in 23S rRNA + 5'-deoxyadenosine + L-methionine + 2 oxidized [2Fe-2S]-[ferredoxin] + S-adenosyl-L-homocysteine. It carries out the reaction adenosine(37) in tRNA + 2 reduced [2Fe-2S]-[ferredoxin] + 2 S-adenosyl-L-methionine = 2-methyladenosine(37) in tRNA + 5'-deoxyadenosine + L-methionine + 2 oxidized [2Fe-2S]-[ferredoxin] + S-adenosyl-L-homocysteine. Specifically methylates position 2 of adenine 2503 in 23S rRNA and position 2 of adenine 37 in tRNAs. This chain is Probable dual-specificity RNA methyltransferase RlmN, found in Clostridium botulinum (strain ATCC 19397 / Type A).